A 300-amino-acid polypeptide reads, in one-letter code: Sulfate adenylyltransferase subunit 2 (300 aa).

Positions Arg-281–Phe-300 are disordered.

The protein belongs to the PAPS reductase family. CysD subfamily. As to quaternary structure, heterodimer composed of CysD, the smaller subunit, and CysN.

It catalyses the reaction sulfate + ATP + H(+) = adenosine 5'-phosphosulfate + diphosphate. It participates in sulfur metabolism; hydrogen sulfide biosynthesis; sulfite from sulfate: step 1/3. In terms of biological role, with CysN forms the ATP sulfurylase (ATPS) that catalyzes the adenylation of sulfate producing adenosine 5'-phosphosulfate (APS) and diphosphate, the first enzymatic step in sulfur assimilation pathway. APS synthesis involves the formation of a high-energy phosphoric-sulfuric acid anhydride bond driven by GTP hydrolysis by CysN coupled to ATP hydrolysis by CysD. The protein is Sulfate adenylyltransferase subunit 2 of Brucella abortus (strain 2308).